Consider the following 164-residue polypeptide: S-ribosylhomocysteine lyase (164 aa).

3 residues coordinate Fe cation: His54, His58, and Cys128.

It belongs to the LuxS family. In terms of assembly, homodimer. The cofactor is Fe cation.

The catalysed reaction is S-(5-deoxy-D-ribos-5-yl)-L-homocysteine = (S)-4,5-dihydroxypentane-2,3-dione + L-homocysteine. Functionally, involved in the synthesis of autoinducer 2 (AI-2) which is secreted by bacteria and is used to communicate both the cell density and the metabolic potential of the environment. The regulation of gene expression in response to changes in cell density is called quorum sensing. Catalyzes the transformation of S-ribosylhomocysteine (RHC) to homocysteine (HC) and 4,5-dihydroxy-2,3-pentadione (DPD). The polypeptide is S-ribosylhomocysteine lyase (Campylobacter jejuni subsp. jejuni serotype O:6 (strain 81116 / NCTC 11828)).